The following is a 639-amino-acid chain: MKVITSLISSILLKFIHKDFHEIYARMSLLDRFLLLIVHGVDKMVPWHKLPVFLGLTYLEVRRHLHQQYNLLNVGQTPTGIRFDPANYPYRTADGKFNDPFNEGVGSQNSFFGRNCPPVDQKSKLRRPDPMVVATKLLGRKKFIDTGKQFNMIAASWIQFMIHDWIDHLEDTHQIELVAPKEVASKCPLSSFRFLKTKEVPTGFFEIKTGSQNIRTPWWDSSVIYGSNSKTLDRVRTYKDGKLKISEETGLLLHDEDGLAISGDIRNSWAGVSALQALFIKEHNAVCDALKDEDDDLEDEDLYRYARLVTSAVVAKIHTIDWTVQLLKTDTLLAGMRANWYGLLGKKFKDSFGHAGSSILGGVVGMKKPQNHGVPYSLTEDFTSVYRMHSLLPDQLHILDIDDVPGTNKSLPLIQEISMRDLIGRKGEETMSHIGFTKLMVSMGHQASGALELMNYPMWLRDIVPHDPNGQARPDHVDLAALEIYRDRERSVPRYNEFRRSMFMIPITKWEDLTEDEEAIEVLDDVYDGDVEELDLLVGLMAEKKIKGFAISETAFYIFLIMATRRLEADRFFTSDFNETIYTKKGLEWVNTTESLKDVIDRHYPDMTDKWMNSESAFSVWDSPPLTKNPIPLYLRIPS.

The Proton acceptor role is filled by His163. Residue Asp164 participates in Ca(2+) binding. A heme b-binding site is contributed by His168. Ca(2+) is bound by residues Thr216, Trp218, Asp220, and Ser222. His389, Arg486, and Arg490 together coordinate heme b.

It belongs to the peroxidase family. As to quaternary structure, forms monomers in solution. Heme b is required as a cofactor. Ca(2+) serves as cofactor. Expressed in roots (epiderm), mature flowers (e.g. anthers) and senescing leaves.

It localises to the lipid droplet. It catalyses the reaction a 1,2-saturated fatty acid + O2 = a (2R)-2-hydroperoxy fatty acid. It carries out the reaction (9Z,12Z,15Z)-octadecatrienoate + O2 = (R)-2-hydroperoxy-(9Z,12Z,15Z)-octadecatrienoate. The enzyme catalyses hexadecanoate + O2 = (2R)-2-hydroperoxyhexadecanoate. The catalysed reaction is (9Z,12Z)-octadecadienoate + O2 = (2R,9Z,12Z)-2-hydroperoxyoctadecadienoate. It catalyses the reaction (9Z)-octadecenoate + O2 = (2R,9Z)-2-hydroperoxyoctadecenoate. Its function is as follows. Alpha-dioxygenase that catalyzes the primary oxygenation step of a variety of 14-20 carbon fatty acids, containing up to three unsaturated bonds, into their corresponding 2R-hydroperoxides. Involved in the production of oxylipins that function in cell signaling, wound healing, and protection from infection. Mediates protection against oxidative stress and cell death, probably by generating some lipid-derived molecules. Promotes local and systemic plant defense in a salicylic acid (SA)-dependent manner, including the establishment of systemic acquired resistance (SAR) in response to incompatible interaction. Involved in a negative regulation of abscisic acid (ABA)-mediated signaling pathway. This is Alpha-dioxygenase 1 from Arabidopsis thaliana (Mouse-ear cress).